The sequence spans 297 residues: 3-mercaptopyruvate sulfurtransferase (297 aa).

A2 bears the N-acetylalanine mark. Positions 25–144 (SSQPLKLLDA…WLNQNLPISS (120 aa)) constitute a Rhodanese 1 domain. At S35 the chain carries Phosphoserine. N6-acetyllysine; alternate is present on K40. K40 is modified (N6-succinyllysine; alternate). The hinge stretch occupies residues 145-160 (GKSHSEPAEFSAQLDP). K146 and K164 each carry N6-succinyllysine. In terms of domain architecture, Rhodanese 2 spans 174-288 (DARRFQVVDA…WYMRAQPEHI (115 aa)). Residue R188 coordinates substrate. C248 functions as the Cysteine persulfide intermediate in the catalytic mechanism.

As to quaternary structure, monomer (active form). Homodimer; disulfide-linked (inactive form). As to expression, expressed in the brain and retina. In the retina, localized to the inner and outer plexiform layer, the inner and outer nuclear layer and the outer segments of photoreceptors. In the brain, localized to neurons of mitral cell layers, glomerular, and external plexiform layers in the olfactory bulb. Also found in Purkinje cell stomata and proximal dendrites. In the spinal cord, localized to large neurons. In the cerebral cortex, localized to pyramidial neurons in layers II/III and V, and in layers I-VI of neocortical areas. In the hippocampus, found in CA1 and CA3 pyramidal cells.

The protein resides in the cytoplasm. Its subcellular location is the mitochondrion. The protein localises to the synapse. It localises to the synaptosome. It carries out the reaction 2-oxo-3-sulfanylpropanoate + [thioredoxin]-dithiol = [thioredoxin]-disulfide + hydrogen sulfide + pyruvate + H(+). Its activity is regulated as follows. By oxidative stress, and thioredoxin. Under oxidative stress conditions, the catalytic cysteine site is converted to a sulfenate which inhibits the MPST enzyme activity. Reduced thioredoxin cleaves an intersubunit disulfide bond to turn on the redox switch and reactivate the enzyme. Inhibited by different oxidants, hydrogen peroxide and tetrathionate. Transfer of a sulfur ion to cyanide or to other thiol compounds. Also has weak rhodanese activity. Detoxifies cyanide and is required for thiosulfate biosynthesis. Acts as an antioxidant. In combination with cysteine aminotransferase (CAT), contributes to the catabolism of cysteine and is an important producer of hydrogen sulfide in the brain, retina and vascular endothelial cells. Hydrogen sulfide H(2)S is an important synaptic modulator, signaling molecule, smooth muscle contractor and neuroprotectant. Its production by the 3MST/CAT pathway is regulated by calcium ions. The protein is 3-mercaptopyruvate sulfurtransferase (Mpst) of Mus musculus (Mouse).